Here is a 374-residue protein sequence, read N- to C-terminus: Ribonuclease D (374 aa).

The region spanning 6–171 is the 3'-5' exonuclease domain; it reads IISTTEDLKK…RATRVILLSK (166 aa). One can recognise an HRDC domain in the interval 213–292; it reads DRKSIGVAQE…ARALNKKEVD (80 aa).

It belongs to the RNase D family. The cofactor is a divalent metal cation.

The protein resides in the cytoplasm. It catalyses the reaction Exonucleolytic cleavage that removes extra residues from the 3'-terminus of tRNA to produce 5'-mononucleotides.. In terms of biological role, exonuclease involved in the 3' processing of various precursor tRNAs. Initiates hydrolysis at the 3'-terminus of an RNA molecule and releases 5'-mononucleotides. This Desulfotalea psychrophila (strain LSv54 / DSM 12343) protein is Ribonuclease D.